The following is a 270-amino-acid chain: Phospholysine phosphohistidine inorganic pyrophosphate phosphatase (270 aa).

The Mg(2+) site is built by D14 and S16. Residues 14–16 (DVS), 52–53 (TN), and K187 each bind substrate. A Mg(2+)-binding site is contributed by D212.

Belongs to the HAD-like hydrolase superfamily. Mg(2+) serves as cofactor.

It is found in the cytoplasm. It localises to the nucleus. The catalysed reaction is diphosphate + H2O = 2 phosphate + H(+). Phosphatase that hydrolyzes imidodiphosphate, 3-phosphohistidine and 6-phospholysine. Has broad substrate specificity and can also hydrolyze inorganic diphosphate, but with lower efficiency. In Xenopus laevis (African clawed frog), this protein is Phospholysine phosphohistidine inorganic pyrophosphate phosphatase (lhpp).